The sequence spans 629 residues: tRNA uridine 5-carboxymethylaminomethyl modification enzyme MnmG (629 aa).

Residues 14 to 19 (GAGHAG), Val-126, and Ser-181 contribute to the FAD site. 273 to 287 (GPRYCPSIEDKVVRF) serves as a coordination point for NAD(+). Residue Gln-370 participates in FAD binding.

The protein belongs to the MnmG family. Homodimer. Heterotetramer of two MnmE and two MnmG subunits. It depends on FAD as a cofactor.

Its subcellular location is the cytoplasm. In terms of biological role, NAD-binding protein involved in the addition of a carboxymethylaminomethyl (cmnm) group at the wobble position (U34) of certain tRNAs, forming tRNA-cmnm(5)s(2)U34. This Bacillus cereus (strain ZK / E33L) protein is tRNA uridine 5-carboxymethylaminomethyl modification enzyme MnmG.